We begin with the raw amino-acid sequence, 636 residues long: Threonine--tRNA ligase (636 aa).

The 63-residue stretch at 1–63 folds into the TGS domain; that stretch reads MPMITITLPD…EHDASLRIIT (63 aa). Residues 245 to 536 are catalytic; sequence DHRKIGKAQD…LIEHHAGAFP (292 aa). The Zn(2+) site is built by cysteine 336, histidine 387, and histidine 513.

This sequence belongs to the class-II aminoacyl-tRNA synthetase family. In terms of assembly, homodimer. The cofactor is Zn(2+).

Its subcellular location is the cytoplasm. It carries out the reaction tRNA(Thr) + L-threonine + ATP = L-threonyl-tRNA(Thr) + AMP + diphosphate + H(+). Functionally, catalyzes the attachment of threonine to tRNA(Thr) in a two-step reaction: L-threonine is first activated by ATP to form Thr-AMP and then transferred to the acceptor end of tRNA(Thr). Also edits incorrectly charged L-seryl-tRNA(Thr). The chain is Threonine--tRNA ligase from Xanthomonas campestris pv. campestris (strain 8004).